The following is a 445-amino-acid chain: Sporulation-specific glucan 1,3-beta-glucosidase (445 aa).

An N-terminal signal peptide occupies residues 1-21 (MVSFRGLTTLTLLFTKLVNCN). An N-linked (GlcNAc...) asparagine glycan is attached at Asn201. The Proton donor role is filled by Glu233. Glu335 functions as the Nucleophile in the catalytic mechanism.

It belongs to the glycosyl hydrolase 5 (cellulase A) family.

Its subcellular location is the secreted. It catalyses the reaction Successive hydrolysis of beta-D-glucose units from the non-reducing ends of (1-&gt;3)-beta-D-glucans, releasing alpha-glucose.. In terms of biological role, probably involved in the processes of spore formation and contributes to ascospore thermoresistance by participating in the morphogenesis of ascospore walls. The enzyme may do this by modifying glucan linkages in the developing ascospore wall, thus strengthening it or lending it plasticity. The chain is Sporulation-specific glucan 1,3-beta-glucosidase (SPR1) from Saccharomyces cerevisiae (strain ATCC 204508 / S288c) (Baker's yeast).